A 414-amino-acid polypeptide reads, in one-letter code: Serine/threonine transporter SstT (414 aa).

At 2 to 15 the chain is on the cytoplasmic side; it reads TTQHSPGLFRRLAH. A helical transmembrane segment spans residues 16-36; sequence GSLVKQILAGLILGILLAWIS. The Periplasmic segment spans residues 37–45; it reads KPAAEAVGL. A helical transmembrane segment spans residues 46–66; it reads LGTLFVGALKAVAPILVLMLV. Residues 67-83 are Cytoplasmic-facing; that stretch reads MASIANHQHGQKTNIRP. The helical transmembrane segment at 84–104 threads the bilayer; the sequence is ILFLYLLGTFSAALAAVIFSF. Topologically, residues 105–142 are periplasmic; that stretch reads AFPSTLHLSSSAGDISPPSGIVEVMRGLVMSMVSNPID. The helical transmembrane segment at 143-163 threads the bilayer; that stretch reads ALLKGNYIGILVWAIGLGFAL. Topologically, residues 164 to 179 are cytoplasmic; the sequence is RHGNETTKNLVNDMSN. Residues 180 to 200 traverse the membrane as a helical segment; that stretch reads AVTFMVKLVIHFAPIGIFGLV. Residues 201–217 lie on the Periplasmic side of the membrane; that stretch reads SSTLATTGFSTLWGYAQ. A helical membrane pass occupies residues 218 to 238; the sequence is LLVVLVGCMLLVALVVNPLLV. At 239-299 the chain is on the cytoplasmic side; that stretch reads WWKIRRNPFP…VSIPLGATIN (61 aa). The helical transmembrane segment at 300-320 threads the bilayer; that stretch reads MAGAAITITVLTLAAVNTLGI. Topologically, residues 321–331 are periplasmic; that stretch reads PVDLPTALLLS. Residues 332 to 352 form a helical membrane-spanning segment; the sequence is VVASLCACGASGVAGGSLLLI. Residues 353 to 414 lie on the Cytoplasmic side of the membrane; that stretch reads PLACNMFGIS…DRLANSALRN (62 aa).

Belongs to the dicarboxylate/amino acid:cation symporter (DAACS) (TC 2.A.23) family.

It localises to the cell inner membrane. It carries out the reaction L-serine(in) + Na(+)(in) = L-serine(out) + Na(+)(out). The catalysed reaction is L-threonine(in) + Na(+)(in) = L-threonine(out) + Na(+)(out). In terms of biological role, involved in the import of serine and threonine into the cell, with the concomitant import of sodium (symport system). The chain is Serine/threonine transporter SstT from Escherichia coli (strain UTI89 / UPEC).